The primary structure comprises 288 residues: Protein sprouty homolog 3 (288 aa).

Residues 154-267 (KCVPCTAVRP…PGCRCKRHTN (114 aa)) enclose the SPR domain.

This sequence belongs to the sprouty family. In terms of assembly, interacts with TESK1. Interacts with USP11. Interacts with CAV1 (via C-terminus). As to expression, expressed in the brain with expression the highest in Purkinje cell bodies and projections in the cerebellum (at protein level). Also expressed in central and peripheral nervous system ganglion cells, superior cervical ganglion and dorsal root ganglion (at protein level). Expressed in the retinal ganglion cell layer and the inner nuclear layer (at protein level).

The protein localises to the cytoplasm. Its function is as follows. Inhibits neurite branching, arbor length and neurite complexity. Inhibits EGF-mediated p42/44 ERK signaling. Negatively regulates the MAPK cascade, resulting in a reduction of extracellular matrix protein accumulation. May function as an antagonist of fibroblast growth factor (FGF) pathways and may negatively modulate respiratory organogenesis. This chain is Protein sprouty homolog 3, found in Mus musculus (Mouse).